A 167-amino-acid polypeptide reads, in one-letter code: 3-isopropylmalate dehydratase small subunit (167 aa).

It belongs to the LeuD family. LeuD type 2 subfamily. As to quaternary structure, heterodimer of LeuC and LeuD.

It carries out the reaction (2R,3S)-3-isopropylmalate = (2S)-2-isopropylmalate. The protein operates within amino-acid biosynthesis; L-leucine biosynthesis; L-leucine from 3-methyl-2-oxobutanoate: step 2/4. Functionally, catalyzes the isomerization between 2-isopropylmalate and 3-isopropylmalate, via the formation of 2-isopropylmaleate. This Sulfurimonas denitrificans (strain ATCC 33889 / DSM 1251) (Thiomicrospira denitrificans (strain ATCC 33889 / DSM 1251)) protein is 3-isopropylmalate dehydratase small subunit.